A 145-amino-acid polypeptide reads, in one-letter code: Peptide methionine sulfoxide reductase MsrB (145 aa).

The MsrB domain maps to 4-127; sequence SDELKQRIGD…NSAALKFIPY (124 aa). Cys116 serves as the catalytic Nucleophile.

The protein belongs to the MsrB Met sulfoxide reductase family.

It catalyses the reaction L-methionyl-[protein] + [thioredoxin]-disulfide + H2O = L-methionyl-(R)-S-oxide-[protein] + [thioredoxin]-dithiol. This is Peptide methionine sulfoxide reductase MsrB from Streptococcus pyogenes serotype M1.